The following is a 1098-amino-acid chain: Probable arabinosyltransferase B (1098 aa).

A run of 12 helical transmembrane segments spans residues 28 to 50 (WVAT…LPVV), 217 to 239 (LKLL…LWRL), 271 to 293 (ASWR…WHVI), 402 to 419 (LRPE…YVLI), 434 to 456 (AVVT…AALV), 472 to 494 (LVGT…TVVF), 541 to 558 (FGFL…FIML), 570 to 587 (PAWR…FLMF), 597 to 619 (GLFA…PSVL), 626 to 648 (MAFL…GWWY), 663 to 685 (IDGI…YAAW), and 698 to 720 (LIRA…VFVA).

The protein belongs to the emb family.

It is found in the cell membrane. Arabinosyl transferase responsible for the polymerization of arabinose into the arabinan of arabinogalactan. This chain is Probable arabinosyltransferase B (embB), found in Mycobacterium bovis (strain ATCC BAA-935 / AF2122/97).